A 548-amino-acid chain; its full sequence is 2-succinyl-5-enolpyruvyl-6-hydroxy-3-cyclohexene-1-carboxylate synthase (548 aa).

This sequence belongs to the TPP enzyme family. MenD subfamily. As to quaternary structure, homodimer. Mg(2+) is required as a cofactor. It depends on Mn(2+) as a cofactor. Requires thiamine diphosphate as cofactor.

The enzyme catalyses isochorismate + 2-oxoglutarate + H(+) = 5-enolpyruvoyl-6-hydroxy-2-succinyl-cyclohex-3-ene-1-carboxylate + CO2. It participates in quinol/quinone metabolism; 1,4-dihydroxy-2-naphthoate biosynthesis; 1,4-dihydroxy-2-naphthoate from chorismate: step 2/7. The protein operates within quinol/quinone metabolism; menaquinone biosynthesis. In terms of biological role, catalyzes the thiamine diphosphate-dependent decarboxylation of 2-oxoglutarate and the subsequent addition of the resulting succinic semialdehyde-thiamine pyrophosphate anion to isochorismate to yield 2-succinyl-5-enolpyruvyl-6-hydroxy-3-cyclohexene-1-carboxylate (SEPHCHC). In Mycobacterium ulcerans (strain Agy99), this protein is 2-succinyl-5-enolpyruvyl-6-hydroxy-3-cyclohexene-1-carboxylate synthase.